The chain runs to 542 residues: Propane 2-monooxygenase, hydroxylase component large subunit (542 aa).

Residues glutamate 97, glutamate 127, histidine 130, glutamate 192, glutamate 226, and histidine 229 each contribute to the Fe cation site.

This sequence belongs to the TmoA/XamoA family. As to quaternary structure, the propane 2-monooxygenase multicomponent enzyme system is composed of an electron transfer component and a monooxygenase component interacting with the effector protein MimD. The electron transfer component is composed of a reductase (MimB), and the monooxygenase component is formed by a large subunit (MimA) and a small subunit (MimC). Requires the presence of the chaperonin-like protein MimG to ensure a productive folding, resulting of a soluble MimA, which leads to the active form of MimABCD. Requires Fe(2+) as cofactor.

It catalyses the reaction propane + NADH + O2 + H(+) = propan-2-ol + NAD(+) + H2O. The enzyme catalyses acetone + NADH + O2 + H(+) = hydroxyacetone + NAD(+) + H2O. It carries out the reaction butan-2-one + NADH + O2 + H(+) = 1-hydroxy-2-butanone + NAD(+) + H2O. The catalysed reaction is phenol + NADH + O2 + H(+) = hydroquinone + NAD(+) + H2O. In terms of biological role, component of the propane 2-monooxygenase multicomponent enzyme system which is involved in the degradation of propane via the O2-dependent hydroxylation of propane. Also involved in the degradation of acetone via the O2-dependent hydroxylation of acetone. Also able to catalyze the oxidation of phenol, methylethylketone (2-butanone), 1-propanol and 2-propanol. This chain is Propane 2-monooxygenase, hydroxylase component large subunit, found in Mycolicibacterium goodii (Mycobacterium goodii).